The chain runs to 299 residues: ATP phosphoribosyltransferase (299 aa).

The protein belongs to the ATP phosphoribosyltransferase family. Long subfamily. It depends on Mg(2+) as a cofactor.

It localises to the cytoplasm. The catalysed reaction is 1-(5-phospho-beta-D-ribosyl)-ATP + diphosphate = 5-phospho-alpha-D-ribose 1-diphosphate + ATP. The protein operates within amino-acid biosynthesis; L-histidine biosynthesis; L-histidine from 5-phospho-alpha-D-ribose 1-diphosphate: step 1/9. Its activity is regulated as follows. Feedback inhibited by histidine. Its function is as follows. Catalyzes the condensation of ATP and 5-phosphoribose 1-diphosphate to form N'-(5'-phosphoribosyl)-ATP (PR-ATP). Has a crucial role in the pathway because the rate of histidine biosynthesis seems to be controlled primarily by regulation of HisG enzymatic activity. The protein is ATP phosphoribosyltransferase of Actinobacillus pleuropneumoniae serotype 5b (strain L20).